Here is a 957-residue protein sequence, read N- to C-terminus: MTQTLSQLENSGAFIERHIGPDAAQQQEMLNAVGAQSLNALTGQIVPKDIQLATPPQVGAPATEYAALAELKAIASRNKRFTSYIGMGYTAVQLPPVILRNMLENPGWYTAYTPYQPEVSQGRLEALLNFQQVTLDLTGLDMASASLLDEATAAAEAMAMAKRVSKLKNANRFFVASDVHPQTLDVVRTRAETFGFEVIVDDAQKVLDHQDVFGVLLQQVGTTGEIHDYTALISELKSRKIVVSVAADIMALVLLTAPGKQGADIVFGSAQRFGVPMGYGGPHAAFFAAKDEYKRSMPGRIIGVSKDAAGNTALRMAMQTREQHIRREKANSNICTSQVLLANIASLYAVYHGPIGLKRIANRIHRLTDILAAGLQQKGLKLRHAHYFDTLCVEVADKAGVLARAEAAEINLRSDILNAVGITLDETTTRENVMQLFSVLLGDNHGLDIDTLDKDVAHDSRSIQPAMLRDDEILTHPVFNRYHSETEMMRYMHSLERKDLALNQAMIPLGSCTMKLNAAAEMIPITWPEFAELHPFCPPEQAEGYQQMIAQLADWLVKLTGYDAVCMQPNSGAQGEYAGLLAIRHYHESRNEGHRDICLIPASAHGTNPASAHMAGMQVVVVACDKNGNIDLADLRAKAEQAGDNLSCIMVTYPSTHGVYEETIREVCEVVHQFGGQVYLDGANMNAQVGITSPGFIGADVSHLNLHKTFCIPHGGGGPGMGPIGVKAHLAPFVPGHSVVQIEGMLTRQGAVSAAPFGSASILPISWMYIRMMGAEGLKKASQVAILNANYIASRLQDAFPVLYTGRDGRVAHECILDIRPLKEETGISELDIAKRLIDYGFHAPTMSFPVAGTLMVEPTESESKVELDRFIDAMLAIRAEIDQVKAGVWPLEDNPLVNAPHIQSELVAEWAHPYSREVAVFPAGVADKYWPTVKRLDDVYGDRNLFCSCVPISEYQ.

An N6-(pyridoxal phosphate)lysine modification is found at Lys708.

Belongs to the GcvP family. The glycine cleavage system is composed of four proteins: P, T, L and H. Pyridoxal 5'-phosphate is required as a cofactor.

It carries out the reaction N(6)-[(R)-lipoyl]-L-lysyl-[glycine-cleavage complex H protein] + glycine + H(+) = N(6)-[(R)-S(8)-aminomethyldihydrolipoyl]-L-lysyl-[glycine-cleavage complex H protein] + CO2. The glycine cleavage system catalyzes the degradation of glycine. The P protein binds the alpha-amino group of glycine through its pyridoxal phosphate cofactor; CO(2) is released and the remaining methylamine moiety is then transferred to the lipoamide cofactor of the H protein. The polypeptide is Glycine dehydrogenase (decarboxylating) (Shigella dysenteriae serotype 1 (strain Sd197)).